Here is a 293-residue protein sequence, read N- to C-terminus: Ribosomal protein L11 methyltransferase (293 aa).

Residues Thr-145, Gly-166, Asp-188, and Asn-230 each contribute to the S-adenosyl-L-methionine site.

Belongs to the methyltransferase superfamily. PrmA family.

It is found in the cytoplasm. It carries out the reaction L-lysyl-[protein] + 3 S-adenosyl-L-methionine = N(6),N(6),N(6)-trimethyl-L-lysyl-[protein] + 3 S-adenosyl-L-homocysteine + 3 H(+). Its function is as follows. Methylates ribosomal protein L11. This chain is Ribosomal protein L11 methyltransferase, found in Salmonella newport (strain SL254).